The chain runs to 103 residues: Phosphoribosyl-ATP pyrophosphatase (103 aa).

It belongs to the PRA-PH family.

Its subcellular location is the cytoplasm. It catalyses the reaction 1-(5-phospho-beta-D-ribosyl)-ATP + H2O = 1-(5-phospho-beta-D-ribosyl)-5'-AMP + diphosphate + H(+). Its pathway is amino-acid biosynthesis; L-histidine biosynthesis; L-histidine from 5-phospho-alpha-D-ribose 1-diphosphate: step 2/9. In Rhodobacter capsulatus (strain ATCC BAA-309 / NBRC 16581 / SB1003), this protein is Phosphoribosyl-ATP pyrophosphatase (hisE).